Consider the following 344-residue polypeptide: Acyl-CoA ligase clz12 (344 aa).

2 AMP-binding regions span residues 2–239 and 248–322; these read VQRS…IIKV and ELET…PSGK.

It belongs to the ATP-dependent AMP-binding enzyme family.

The protein operates within secondary metabolite biosynthesis. Its function is as follows. Acyl-CoA ligase; part of the gene cluster that mediates the biosynthesis of squalestatin S1 (SQS1, also known as zaragozic acid A), a heavily oxidized fungal polyketide that offers potent cholesterol lowering activity by targeting squalene synthase (SS). SQS1 is composed of a 2,8-dioxobicyclic[3.2.1]octane-3,4,5-tricarboxyclic acid core that is connected to two lipophilic polyketide arms. These initial steps feature the priming of an unusual benzoic acid starter unit onto the highly reducing polyketide synthase clz14, followed by oxaloacetate extension and product release to generate a tricarboxylic acid containing product. The phenylalanine ammonia lyase (PAL) clz10 and the acyl-CoA ligase clz12 are involved in transforming phenylalanine into benzoyl-CoA. The citrate synthase-like protein clz17 is involved in connecting the C-alpha-carbons of the hexaketide chain and oxaloacetate to afford the tricarboxylic acid unit. The potential hydrolytic enzymes, clz11 and clz13, are in close proximity to pks2 and may participate in product release. On the other side, the tetraketide arm is synthesized by a the squalestatin tetraketide synthase clz2 and enzymatically esterified to the core in the last biosynthetic step, by the acetyltransferase clz6. The biosynthesis of the tetraketide must involve 3 rounds of chain extension. After the first and second rounds methyl-transfer occurs, and in all rounds of extension the ketoreductase and dehydratase are active. The enoyl reductase and C-MeT of clz2 are not active in the final round of extension. The acetyltransferase clz6 appears to have a broad substrate selectivity for its acyl CoA substrate, allowing the in vitro synthesis of novel squalestatins. The biosynthesis of SQS1 requires several oxidative steps likely performed by oxidoreductases clz3, clz15 and clz16. Finally, in support of the identification of the cluster as being responsible for SQS1 production, the cluster contains a gene encoding a putative squalene synthase (SS) clz20, suggesting a likely mechanism for self-resistance. This chain is Acyl-CoA ligase clz12, found in Cochliobolus lunatus (Filamentous fungus).